The sequence spans 146 residues: Mu-like prophage FluMu G protein 1 (146 aa).

To phage Mu protein G.

This chain is Mu-like prophage FluMu G protein 1, found in Haemophilus influenzae (strain ATCC 51907 / DSM 11121 / KW20 / Rd).